A 342-amino-acid chain; its full sequence is Nucleoid-associated protein SO_2177 (342 aa).

This sequence belongs to the YejK family.

It is found in the cytoplasm. It localises to the nucleoid. In Shewanella oneidensis (strain ATCC 700550 / JCM 31522 / CIP 106686 / LMG 19005 / NCIMB 14063 / MR-1), this protein is Nucleoid-associated protein SO_2177.